The following is a 437-amino-acid chain: Enolase (437 aa).

Glutamine 162 is a (2R)-2-phosphoglycerate binding site. Catalysis depends on glutamate 204, which acts as the Proton donor. Mg(2+) contacts are provided by aspartate 251, glutamate 297, and aspartate 324. Residues lysine 349, arginine 378, serine 379, and lysine 400 each contribute to the (2R)-2-phosphoglycerate site. The Proton acceptor role is filled by lysine 349.

It belongs to the enolase family. Mg(2+) serves as cofactor.

The protein resides in the cytoplasm. Its subcellular location is the secreted. It is found in the cell surface. The catalysed reaction is (2R)-2-phosphoglycerate = phosphoenolpyruvate + H2O. It functions in the pathway carbohydrate degradation; glycolysis; pyruvate from D-glyceraldehyde 3-phosphate: step 4/5. Catalyzes the reversible conversion of 2-phosphoglycerate (2-PG) into phosphoenolpyruvate (PEP). It is essential for the degradation of carbohydrates via glycolysis. In Chlorobium luteolum (strain DSM 273 / BCRC 81028 / 2530) (Pelodictyon luteolum), this protein is Enolase.